Reading from the N-terminus, the 802-residue chain is Copper-exporting P-type ATPase (802 aa).

HMA domains lie at 5-70 and 72-138; these read KKTT…YGVA and ETVE…YDAS. Cysteine 16, cysteine 19, cysteine 83, and cysteine 86 together coordinate Cu(+). The next 6 membrane-spanning stretches (helical) occupy residues 161-181, 192-212, 224-244, 256-276, 411-431, and 438-458; these read LIISAVLSLPLLMLMFVHLFN, WFQFILATPVQFIIGWQFYVG, MDVLVAVGTSAAYFYSIYEMV, LYFETSAVLITLILFGKYLEA, YFVPIVVGIALLTFIVWITLV, and PALVASISVLVIACPCALGLA. The 4-aspartylphosphate intermediate role is filled by aspartate 495. Mg(2+) is bound by residues aspartate 690 and aspartate 694. A run of 2 helical transmembrane segments spans residues 748–767 and 771–790; these read LFWAFGYNIAGIPIAALGLL and VAGAAMALSSVSVVTNALRL.

Belongs to the cation transport ATPase (P-type) (TC 3.A.3) family. Type IB subfamily.

It is found in the cell membrane. It carries out the reaction Cu(+)(in) + ATP + H2O = Cu(+)(out) + ADP + phosphate + H(+). Involved in copper export. The chain is Copper-exporting P-type ATPase (copA) from Staphylococcus aureus (strain COL).